Here is a 335-residue protein sequence, read N- to C-terminus: Acetyl-coenzyme A carboxylase carboxyl transferase subunit alpha (335 aa).

Positions 48–308 (TLELKVDALR…KEILIEELKA (261 aa)) constitute a CoA carboxyltransferase C-terminal domain.

The protein belongs to the AccA family. Acetyl-CoA carboxylase is a heterohexamer composed of biotin carboxyl carrier protein (AccB), biotin carboxylase (AccC) and two subunits each of ACCase subunit alpha (AccA) and ACCase subunit beta (AccD).

Its subcellular location is the cytoplasm. The enzyme catalyses N(6)-carboxybiotinyl-L-lysyl-[protein] + acetyl-CoA = N(6)-biotinyl-L-lysyl-[protein] + malonyl-CoA. The protein operates within lipid metabolism; malonyl-CoA biosynthesis; malonyl-CoA from acetyl-CoA: step 1/1. In terms of biological role, component of the acetyl coenzyme A carboxylase (ACC) complex. First, biotin carboxylase catalyzes the carboxylation of biotin on its carrier protein (BCCP) and then the CO(2) group is transferred by the carboxyltransferase to acetyl-CoA to form malonyl-CoA. In Pelodictyon phaeoclathratiforme (strain DSM 5477 / BU-1), this protein is Acetyl-coenzyme A carboxylase carboxyl transferase subunit alpha.